Here is a 210-residue protein sequence, read N- to C-terminus: Protein-methionine-sulfoxide reductase heme-binding subunit MsrQ (210 aa).

Transmembrane regions (helical) follow at residues 8-28 (LAVFLAACIAPVWWLYQAWIF), 37-57 (VLVENFGVATLVMLLITLSMT), 75-95 (LGLWCFAYALLHLSMYALFIL), 110-130 (PYIIVGALALLGLLALAVTSN), 147-167 (IIYVILGLGLLHMFWIVRADL), and 169-189 (EWALYAGIGAFLLLLRIPVFA).

It belongs to the MsrQ family. Heterodimer of a catalytic subunit (MsrP) and a heme-binding subunit (MsrQ). The cofactor is FMN. Heme b serves as cofactor.

It is found in the cell inner membrane. Functionally, part of the MsrPQ system that repairs oxidized periplasmic proteins containing methionine sulfoxide residues (Met-O), using respiratory chain electrons. Thus protects these proteins from oxidative-stress damage caused by reactive species of oxygen and chlorine generated by the host defense mechanisms. MsrPQ is essential for the maintenance of envelope integrity under bleach stress, rescuing a wide series of structurally unrelated periplasmic proteins from methionine oxidation. MsrQ provides electrons for reduction to the reductase catalytic subunit MsrP, using the quinone pool of the respiratory chain. The protein is Protein-methionine-sulfoxide reductase heme-binding subunit MsrQ of Pseudomonas syringae pv. syringae (strain B728a).